Reading from the N-terminus, the 83-residue chain is Putative regulatory protein FMG_0656 (83 aa).

It belongs to the RemA family.

The polypeptide is Putative regulatory protein FMG_0656 (Finegoldia magna (strain ATCC 29328 / DSM 20472 / WAL 2508) (Peptostreptococcus magnus)).